We begin with the raw amino-acid sequence, 755 residues long: Polyribonucleotide nucleotidyltransferase (755 aa).

The Mg(2+) site is built by Asp545 and Asp551. Residues Pro611–Ile670 enclose the KH domain. One can recognise an S1 motif domain in the interval Gly682 to Val751.

The protein belongs to the polyribonucleotide nucleotidyltransferase family. Mg(2+) serves as cofactor.

Its subcellular location is the cytoplasm. It carries out the reaction RNA(n+1) + phosphate = RNA(n) + a ribonucleoside 5'-diphosphate. In terms of biological role, involved in mRNA degradation. Catalyzes the phosphorolysis of single-stranded polyribonucleotides processively in the 3'- to 5'-direction. This chain is Polyribonucleotide nucleotidyltransferase, found in Corynebacterium diphtheriae (strain ATCC 700971 / NCTC 13129 / Biotype gravis).